A 231-amino-acid polypeptide reads, in one-letter code: Ribonuclease 3 (231 aa).

The RNase III domain maps to 5 to 134 (QKKLKNDYGL…FLGALFIDQG (130 aa)). Position 47 (glutamate 47) interacts with Mg(2+). Aspartate 51 is a catalytic residue. Residues asparagine 120 and glutamate 123 each coordinate Mg(2+). The active site involves glutamate 123. The DRBM domain occupies 160–229 (DYKTELQEVL…AENAIKGQNH (70 aa)).

Belongs to the ribonuclease III family. In terms of assembly, homodimer. Requires Mg(2+) as cofactor.

Its subcellular location is the cytoplasm. It catalyses the reaction Endonucleolytic cleavage to 5'-phosphomonoester.. In terms of biological role, digests double-stranded RNA. Involved in the processing of primary rRNA transcript to yield the immediate precursors to the large and small rRNAs (23S and 16S). Processes some mRNAs, and tRNAs when they are encoded in the rRNA operon. Processes pre-crRNA and tracrRNA of type II CRISPR loci if present in the organism. This chain is Ribonuclease 3, found in Lactococcus lactis subsp. lactis (strain IL1403) (Streptococcus lactis).